A 185-amino-acid polypeptide reads, in one-letter code: Potassium-transporting ATPase KdpC subunit (185 aa).

Residues 8 to 28 (LGLVLIMFVLCGFIFPLTVTA) form a helical membrane-spanning segment. Residues 113 to 132 (GQKLSSDAVTTSGSGLDPDI) form a disordered region. The span at 114–126 (QKLSSDAVTTSGS) shows a compositional bias: polar residues.

Belongs to the KdpC family. As to quaternary structure, the system is composed of three essential subunits: KdpA, KdpB and KdpC.

It localises to the cell membrane. Its function is as follows. Part of the high-affinity ATP-driven potassium transport (or Kdp) system, which catalyzes the hydrolysis of ATP coupled with the electrogenic transport of potassium into the cytoplasm. This subunit acts as a catalytic chaperone that increases the ATP-binding affinity of the ATP-hydrolyzing subunit KdpB by the formation of a transient KdpB/KdpC/ATP ternary complex. This is Potassium-transporting ATPase KdpC subunit from Staphylococcus haemolyticus (strain JCSC1435).